The sequence spans 353 residues: UPF0283 membrane protein YcjF (353 aa).

3 consecutive transmembrane segments (helical) span residues M70 to T90, V100 to V120, and E213 to W233.

The protein belongs to the UPF0283 family.

The protein resides in the cell inner membrane. The polypeptide is UPF0283 membrane protein YcjF (Escherichia fergusonii (strain ATCC 35469 / DSM 13698 / CCUG 18766 / IAM 14443 / JCM 21226 / LMG 7866 / NBRC 102419 / NCTC 12128 / CDC 0568-73)).